A 247-amino-acid chain; its full sequence is Phosphoribosylaminoimidazole-succinocarboxamide synthase (247 aa).

This sequence belongs to the SAICAR synthetase family.

It carries out the reaction 5-amino-1-(5-phospho-D-ribosyl)imidazole-4-carboxylate + L-aspartate + ATP = (2S)-2-[5-amino-1-(5-phospho-beta-D-ribosyl)imidazole-4-carboxamido]succinate + ADP + phosphate + 2 H(+). Its pathway is purine metabolism; IMP biosynthesis via de novo pathway; 5-amino-1-(5-phospho-D-ribosyl)imidazole-4-carboxamide from 5-amino-1-(5-phospho-D-ribosyl)imidazole-4-carboxylate: step 1/2. In Gloeobacter violaceus (strain ATCC 29082 / PCC 7421), this protein is Phosphoribosylaminoimidazole-succinocarboxamide synthase.